Consider the following 147-residue polypeptide: UPF0735 ACT domain-containing protein ABC1543 (147 aa).

Residues 70 to 145 enclose the ACT domain; it reads TFSINLADRS…SVERVELVGS (76 aa).

Belongs to the UPF0735 family.

The sequence is that of UPF0735 ACT domain-containing protein ABC1543 from Shouchella clausii (strain KSM-K16) (Alkalihalobacillus clausii).